Here is a 342-residue protein sequence, read N- to C-terminus: Ketol-acid reductoisomerase (NADP(+)) (342 aa).

A KARI N-terminal Rossmann domain is found at 2–181; sequence VKVYYNGDIK…GGARAGVLET (180 aa). NADP(+)-binding positions include 25–28, Arg48, Ser52, and 82–85; these read YGSQ and DEQQ. Residue His107 is part of the active site. An NADP(+)-binding site is contributed by Gly133. Positions 182 to 327 constitute a KARI C-terminal knotted domain; that stretch reads TFKEETETDL…RQLREMMPFV (146 aa). Residues Asp190, Glu194, Glu226, and Glu230 each coordinate Mg(2+). Position 251 (Ser251) interacts with substrate.

This sequence belongs to the ketol-acid reductoisomerase family. Mg(2+) serves as cofactor.

It carries out the reaction (2R)-2,3-dihydroxy-3-methylbutanoate + NADP(+) = (2S)-2-acetolactate + NADPH + H(+). It catalyses the reaction (2R,3R)-2,3-dihydroxy-3-methylpentanoate + NADP(+) = (S)-2-ethyl-2-hydroxy-3-oxobutanoate + NADPH + H(+). It participates in amino-acid biosynthesis; L-isoleucine biosynthesis; L-isoleucine from 2-oxobutanoate: step 2/4. The protein operates within amino-acid biosynthesis; L-valine biosynthesis; L-valine from pyruvate: step 2/4. Functionally, involved in the biosynthesis of branched-chain amino acids (BCAA). Catalyzes an alkyl-migration followed by a ketol-acid reduction of (S)-2-acetolactate (S2AL) to yield (R)-2,3-dihydroxy-isovalerate. In the isomerase reaction, S2AL is rearranged via a Mg-dependent methyl migration to produce 3-hydroxy-3-methyl-2-ketobutyrate (HMKB). In the reductase reaction, this 2-ketoacid undergoes a metal-dependent reduction by NADPH to yield (R)-2,3-dihydroxy-isovalerate. The sequence is that of Ketol-acid reductoisomerase (NADP(+)) from Bacillus velezensis (strain DSM 23117 / BGSC 10A6 / LMG 26770 / FZB42) (Bacillus amyloliquefaciens subsp. plantarum).